The primary structure comprises 456 residues: Proline--tRNA ligase (456 aa).

It belongs to the class-II aminoacyl-tRNA synthetase family. ProS type 3 subfamily. As to quaternary structure, homodimer.

It is found in the cytoplasm. The catalysed reaction is tRNA(Pro) + L-proline + ATP = L-prolyl-tRNA(Pro) + AMP + diphosphate. Its function is as follows. Catalyzes the attachment of proline to tRNA(Pro) in a two-step reaction: proline is first activated by ATP to form Pro-AMP and then transferred to the acceptor end of tRNA(Pro). The sequence is that of Proline--tRNA ligase from Methanococcus aeolicus (strain ATCC BAA-1280 / DSM 17508 / OCM 812 / Nankai-3).